Here is a 91-residue protein sequence, read N- to C-terminus: MTKELCMRCYISGRVQGVWFRASAKNLAEQLMISGWARNLADGRVEVFACGKEDKLEEFYTWLQKGPLNARVDVCTRENLPWEDYISFDVL.

The Acylphosphatase-like domain occupies 6 to 91 (CMRCYISGRV…WEDYISFDVL (86 aa)). Active-site residues include Arg21 and Asn39.

This sequence belongs to the acylphosphatase family.

The catalysed reaction is an acyl phosphate + H2O = a carboxylate + phosphate + H(+). This Legionella pneumophila subsp. pneumophila (strain Philadelphia 1 / ATCC 33152 / DSM 7513) protein is Acylphosphatase (acyP).